The following is a 274-amino-acid chain: HTH-type transcriptional regulator GadX (274 aa).

The HTH araC/xylS-type domain occupies 145–242 (TRVCTVINNN…GMTPTEYQER (98 aa)). 2 DNA-binding regions (H-T-H motif) span residues 162–183 (ARIA…REEE) and 209–232 (IKRV…RNYY).

Homodimer.

Functionally, positively regulates the expression of about fifteen genes involved in acid resistance such as gadA, gadB and gadC. Depending on the conditions (growth phase and medium), can repress gadW. The chain is HTH-type transcriptional regulator GadX (gadX) from Shigella flexneri.